Here is a 300-residue protein sequence, read N- to C-terminus: Protein YIF1B (300 aa).

The interval 1 to 46 (MNQESSFRAPPKRRVRGPNPNISTPHQLFDDTSGGPVPHGGEYPNH) is disordered. Residues 1-142 (MNQESSFRAP…APRFDINAPD (142 aa)) lie on the Cytoplasmic side of the membrane. A helical membrane pass occupies residues 143–163 (LYIPVMAFITYILVAGLALGT). The Extracellular segment spans residues 164-178 (QSRFSPEILGMQASS). The chain crosses the membrane as a helical span at residues 179-199 (ALAWLIVEVLAILLSLYLVTV). Residues 200 to 205 (NTDLTT) lie on the Cytoplasmic side of the membrane. A helical transmembrane segment spans residues 206 to 226 (VDLVAFSGYKYVGMISGVISG). Leu227 is a topological domain (extracellular). The chain crosses the membrane as a helical span at residues 228-248 (LFGKTGYYVVLSWCGISVVFF). Residues 249-278 (MIRTLRLKILSEAAAEGVLVRGARNQLRMY) lie on the Cytoplasmic side of the membrane. Residues 279 to 299 (LTMAIAAVQPIFMYWLTYHLV) form a helical membrane-spanning segment. Position 300 (Arg300) is a topological domain, extracellular.

It belongs to the YIF1 family.

Its subcellular location is the endoplasmic reticulum membrane. The protein localises to the golgi apparatus membrane. It is found in the endoplasmic reticulum-Golgi intermediate compartment membrane. Functions in endoplasmic reticulum to Golgi vesicle-mediated transport and regulates the proper organization of the endoplasmic reticulum and the Golgi. Plays a key role in targeting to neuronal dendrites receptors such as HTR1A. Plays also a role in primary cilium and sperm flagellum assembly probably through protein transport to these compartments. The polypeptide is Protein YIF1B (yif1b) (Xenopus tropicalis (Western clawed frog)).